Consider the following 684-residue polypeptide: Protein EXECUTER 1, chloroplastic (684 aa).

Polar residues predominate over residues 1-31; that stretch reads MPSLSTPPSQNLAFSPAASATSSRLTPSSKR. Residues 1–46 constitute a chloroplast transit peptide; sequence MPSLSTPPSQNLAFSPAASATSSRLTPSSKRSFYPHRLPDPTALCR. The disordered stretch occupies residues 1 to 66; the sequence is MPSLSTPPSQ…SSSSSDDNPR (66 aa). The segment covering 48 to 61 has biased composition (low complexity); sequence SSSSGSNSSSSSSS. Residues 127–162 enclose the UVR domain; sequence DRLLSVLKSQLNRAIKREDYEDAARLKVAIAATATN. Residues 278 to 318 form a disordered region; it reads TLTPGRFLTSPGRKEDTGNLAVESSEDEESDNSDDDSDLLE. A compositionally biased stretch (acidic residues) spans 301–318; the sequence is SSEDEESDNSDDDSDLLE.

The protein localises to the plastid. It is found in the chloroplast. In terms of biological role, together with EX2, enables higher plants to perceive singlet oxygen as a stress signal in plastid that activates a genetically determined nuclear stress response program which triggers a programmed cell death (PCD). This transfer of singlet oxygen-induced stress-related signals from the plastid to the nucleus that triggers genetically controlled PCD pathway is unique to photosynthetic eukaryotes and operates under mild stress conditions, impeding photosystem II (PSII) without causing photooxidative damage of the plant. This chain is Protein EXECUTER 1, chloroplastic, found in Arabidopsis thaliana (Mouse-ear cress).